A 248-amino-acid polypeptide reads, in one-letter code: MSIQSLLDYISVTPDIRQQGKVKHKLSAILFLTVCAVIAGADEWQEIEDFGHERLEWLKKYGDFDNGIPVDDTIARVVSNIDSLAFEKMFIEWMQECHEITDGEIIAIDGKTIRGSFDKGKRKGAIHMVSAFSNENGVVLGQVKTEAKSNEITAIPELLNLLYLKKNLITIDAMGCQKDIASKIKDKKADYLLAVKGNQGKLHHAFEEKFPVNVFSNYKGDSFSTQEISHGRKETRLHIVSNVTPELL.

Belongs to the transposase 11 family.

In Escherichia coli (strain K12), this protein is Putative transposase YncI (yncI).